Reading from the N-terminus, the 539-residue chain is uncharacterized protein (539 aa).

ABC transporter domains are found at residues Leu9–Lys276 and Ile288–Phe536. ATP contacts are provided by residues Gly41–Ser48 and Gly325–Thr332.

This sequence belongs to the ABC transporter superfamily.

This is an uncharacterized protein from Methanocaldococcus jannaschii (strain ATCC 43067 / DSM 2661 / JAL-1 / JCM 10045 / NBRC 100440) (Methanococcus jannaschii).